The following is a 401-amino-acid chain: Argininosuccinate synthase (401 aa).

ATP-binding positions include 9-17 and alanine 35; that span reads AYSGGLDTS. Tyrosine 86 is a binding site for L-citrulline. Residue glycine 116 coordinates ATP. Threonine 118, asparagine 122, and aspartate 123 together coordinate L-aspartate. Asparagine 122 is an L-citrulline binding site. The L-citrulline site is built by arginine 126, serine 175, serine 184, glutamate 261, and tyrosine 273.

Belongs to the argininosuccinate synthase family. Type 1 subfamily. In terms of assembly, homotetramer.

Its subcellular location is the cytoplasm. It catalyses the reaction L-citrulline + L-aspartate + ATP = 2-(N(omega)-L-arginino)succinate + AMP + diphosphate + H(+). Its pathway is amino-acid biosynthesis; L-arginine biosynthesis; L-arginine from L-ornithine and carbamoyl phosphate: step 2/3. This chain is Argininosuccinate synthase, found in Aquifex aeolicus (strain VF5).